Consider the following 786-residue polypeptide: Cadherin-9 (786 aa).

The N-terminal stretch at 1-21 (MRTYSCLQLVIWTCIFHMVDN) is a signal peptide. An N-linked (GlcNAc...) asparagine glycan is attached at Asn21. Residues 22-52 (STLQGKDSSHFLRRIVNLKKDEGKMLHRAKR) constitute a propeptide that is removed on maturation. At 22–614 (STLQGKDSSH…MLAAGLSTGA (593 aa)) the chain is on the extracellular side. Cadherin domains are found at residues 54 to 158 (WMWN…EPKF), 159 to 267 (TKDL…PPRF), 268 to 382 (PQST…PPVF), 383 to 487 (SKLS…APEF), and 487 to 604 (FATY…AEAL). A glycan (N-linked (GlcNAc...) asparagine) is linked at Asn254. N-linked (GlcNAc...) asparagine glycosylation is found at Asn454 and Asn535. A helical transmembrane segment spans residues 615–635 (LIAILLCVVILLTLIVLFAAL). Residues 636–786 (KRQRKKEPLI…AEMYGGNDSD (151 aa)) lie on the Cytoplasmic side of the membrane. Ser785 bears the Phosphoserine mark.

The protein resides in the cell membrane. Cadherins are calcium-dependent cell adhesion proteins. They preferentially interact with themselves in a homophilic manner in connecting cells; cadherins may thus contribute to the sorting of heterogeneous cell types. The protein is Cadherin-9 (Cdh9) of Mus musculus (Mouse).